We begin with the raw amino-acid sequence, 234 residues long: MEFSPPLQRATLIQRYKRFLADVITPDGRELTLHCPNTGAMTGCATPGDTVWYSTSDNTKRKYPHTWELTQSQSGAFICVNTLWANRLTKEAILNESISELSGYSSLKSEVKYGAERSRIDFMLQADSRPDCYIEVKSVTLAENEQGYFPDAVTERGQKHLRELMSVAAEGQRAVIFFAVLHSAITRFSPARHIDEKYAQLLSEAQQRGVEILAYKAEISAEGMALKKSLPVTL.

Positions 201 to 220 (LLSEAQQRGVEILAYKAEIS) form a DNA-binding region, H-T-H motif.

Belongs to the SfsA family.

Binds to DNA non-specifically. Could be a regulatory factor involved in maltose metabolism. The polypeptide is Sugar fermentation stimulation protein A (Escherichia coli (strain 55989 / EAEC)).